The sequence spans 1251 residues: Insulin receptor substrate 1 (1251 aa).

Serine 3 is modified (phosphoserine). The interval 3 to 137 (SPPESDGFSD…GAGGGGGSCS (135 aa)) is mediates interaction with PHIP. Positions 12 to 115 (DVRKVGYLRK…WYQALLQLHN (104 aa)) constitute a PH domain. Position 99 is a phosphoserine; by CK2 (serine 99). Residues 160–264 (FKEVWQVILK…EAMRAMSDEF (105 aa)) form the IRS-type PTB domain. Residues 262-430 (DEFRPRSKSQ…SDGGFISSDE (169 aa)) form a disordered region. Over residues 269–281 (KSQSSSNCSNPIS) the composition is skewed to low complexity. Serine 270 bears the Phosphoserine mark. Position 307 is a phosphoserine; by RPS6KB1 (serine 307). Serine 312 is modified (phosphoserine; by IKKB, MAPK8 and RPS6KB1). Residues serine 323, serine 330, serine 345, and serine 348 each carry the phosphoserine modification. Over residues 354–363 (THAHRHRGSA) the composition is skewed to basic residues. 2 stretches are compositionally biased toward low complexity: residues 383–404 (SPSA…GSTS) and 412–424 (SSAS…SDGG). Residue serine 419 is modified to Phosphoserine. Residues threonine 446 and threonine 453 each carry the phosphothreonine modification. Tyrosine 465 carries the post-translational modification Phosphotyrosine; by INSR. Residues 465–468 (YICM) carry the YXXM motif 1 motif. A disordered region spans residues 494–513 (YTPGTGLGTSPALAGDEASS). Residue serine 527 is modified to Phosphoserine; by RPS6KB1. A YXXM motif 2 motif is present at residues 551-554 (YTEM). The span at 594 to 610 (RRGGHHRPDSSTLHTDD) shows a compositional bias: basic and acidic residues. Residues 594–616 (RRGGHHRPDSSTLHTDDGYMPMS) form a disordered region. Phosphotyrosine; by INSR is present on tyrosine 612. Residues 612 to 615 (YMPM) carry the YXXM motif 3 motif. Phosphoserine is present on serine 629. At tyrosine 632 the chain carries Phosphotyrosine; by INSR. A YXXM motif 4 motif is present at residues 632–635 (YMPM). Position 636 is a phosphoserine; by RPS6KB1 (serine 636). At tyrosine 662 the chain carries Phosphotyrosine. Residues 662–665 (YMMM) carry the YXXM motif 5 motif. The segment at 668-692 (SGGCSPDIGGGPSSSSSSTVPSGSS) is disordered. The YXXM motif 6 signature appears at 730–733 (YMNM). Disordered stretches follow at residues 734–753 (SPVG…GPED) and 769–946 (FKHT…EETG). Residues 774-783 (RPGEPEEGAR) are compositionally biased toward basic and acidic residues. Phosphoserine; by AMPK and SIK2 is present on serine 792. Low complexity-rich tracts occupy residues 799–813 (AATA…SSDS) and 875–891 (QQQQ…QQQQ). Serine 901 carries the phosphoserine modification. Phosphotyrosine; by INSR is present on tyrosine 905. Residues 905-907 (YVN) form a GRB2-binding region. Over residues 924–937 (SRSSPSVRCPSQLQ) the composition is skewed to polar residues. A phosphotyrosine; by INSR mark is found at tyrosine 950 and tyrosine 998. 3 consecutive short sequence motifs (YXXM motif) follow at residues 950–953 (YMKM), 998–1001 (YMTM), and 1021–1024 (YADM). Disordered regions lie at residues 1091-1124 (NQSA…RVGN) and 1130-1149 (AGAA…DVKR). 2 positions are modified to phosphoserine: serine 1109 and serine 1110. Positions 1111-1123 (ETFSSTPSATRVG) are enriched in polar residues. Tyrosine 1188 carries the post-translational modification Phosphotyrosine; by INSR. Lysine 1195 is covalently cross-linked (Glycyl lysine isopeptide (Lys-Gly) (interchain with G-Cter in ubiquitin)). The interval 1195–1251 (KDFKQRPQECTPQPQPPPPPPPHQPLGSSESSSTRRSSEDLSAYASISFQKQPEDLQ) is disordered. The span at 1207 to 1218 (QPQPPPPPPPHQ) shows a compositional bias: pro residues. A Phosphotyrosine; by INSR modification is found at tyrosine 1238.

In terms of assembly, interacts with UBTF and PIK3CA. Interacts (via phosphorylated YXXM motifs) with PIK3R1. Interacts with ROCK1 and FER. Interacts (via PH domain) with PHIP. Interacts with GRB2. Interacts with SOCS7. Interacts (via IRS-type PTB domain) with IGF1R and INSR (via the tyrosine-phosphorylated NPXY motif). Interacts with ALK. Interacts with EIF2AK2/PKR. Interacts with GKAP1. Interacts with DGKZ in the absence of insulin; insulin stimulation decreases this interaction. Found in a ternary complex with DGKZ and PIP5K1A in the absence of insulin stimulation. Interacts with SQSTM1; the interaction is disrupted by the presence of tensin TNS2. Interacts with NCK1 (via SH2 domain). Interacts with NCK2 (via SH3 domain). Interacts with SH2B1; this interaction enhances leptin-induced activation of the PI3-kinase pathway. Interacts with DVL2; this interaction promotes the Wnt/beta-catenin signaling pathway. Interacts with JAK1. Post-translationally, serine phosphorylation of IRS1 is a mechanism for insulin resistance. Ser-312 phosphorylation inhibits insulin action through disruption of IRS1 interaction with the insulin receptor. Phosphorylation of Tyr-905 is required for GRB2-binding. Phosphorylated by ALK. Phosphorylated at Ser-270, Ser-307, Ser-636 and Ser-1109 by RPS6KB1; phosphorylation induces accelerated degradation of IRS1. Phosphorylated on tyrosine residues in response to insulin. In skeletal muscles, dephosphorylated on Tyr-612 by TNS2 under anabolic conditions; dephosphorylation results in the proteasomal degradation of IRS1. In terms of processing, ubiquitinated by the Cul7-RING(FBXW8) complex in a mTOR-dependent manner, leading to its degradation: the Cul7-RING(FBXW8) complex recognizes and binds IRS1 previously phosphorylated by S6 kinase (RPS6KB1 or RPS6KB2). Ubiquitinated by TRAF4 through 'Lys-29' linkage; this ubiquitination regulates the interaction of IRS1 with IGFR and IRS1 tyrosine phosphorylation upon IGF1 stimulation. S-nitrosylation at by BLVRB inhibits its activity.

It localises to the cytoplasm. The protein localises to the nucleus. Its function is as follows. Signaling adapter protein that participates in the signal transduction from two prominent receptor tyrosine kinases, insulin receptor/INSR and insulin-like growth factor I receptor/IGF1R. Plays therefore an important role in development, growth, glucose homeostasis as well as lipid metabolism. Upon phosphorylation by the insulin receptor, functions as a signaling scaffold that propagates insulin action through binding to SH2 domain-containing proteins including the p85 regulatory subunit of PI3K, NCK1, NCK2, GRB2 or SHP2. Recruitment of GRB2 leads to the activation of the guanine nucleotide exchange factor SOS1 which in turn triggers the Ras/Raf/MEK/MAPK signaling cascade. Activation of the PI3K/AKT pathway is responsible for most of insulin metabolic effects in the cell, and the Ras/Raf/MEK/MAPK is involved in the regulation of gene expression and in cooperation with the PI3K pathway regulates cell growth and differentiation. Acts a positive regulator of the Wnt/beta-catenin signaling pathway through suppression of DVL2 autophagy-mediated degradation leading to cell proliferation. This Chlorocebus aethiops (Green monkey) protein is Insulin receptor substrate 1 (IRS1).